A 179-amino-acid chain; its full sequence is uncharacterized protein (179 aa).

The disordered stretch occupies residues 53 to 82 (SPEREDPESPTRGVDEVDGACSEPPTPRPE). Residues 54–67 (PEREDPESPTRGVD) are compositionally biased toward basic and acidic residues.

This is an uncharacterized protein from Ictaluridae (bullhead catfishes).